Consider the following 452-residue polypeptide: Tubulin beta-2 chain (452 aa).

The GTP site is built by glutamine 11, glutamate 72, serine 141, glycine 145, threonine 146, glycine 147, asparagine 207, and asparagine 229. Position 72 (glutamate 72) interacts with Mg(2+). The interval 414–452 (AESNMNDPVAEYQQYQDATADDEEEYDDEAADDHHQYES) is disordered. Over residues 432 to 444 (TADDEEEYDDEAA) the composition is skewed to acidic residues.

It belongs to the tubulin family. As to quaternary structure, dimer of alpha and beta chains. A typical microtubule is a hollow water-filled tube with an outer diameter of 25 nm and an inner diameter of 15 nM. Alpha-beta heterodimers associate head-to-tail to form protofilaments running lengthwise along the microtubule wall with the beta-tubulin subunit facing the microtubule plus end conferring a structural polarity. Microtubules usually have 13 protofilaments but different protofilament numbers can be found in some organisms and specialized cells. It depends on Mg(2+) as a cofactor.

It localises to the cytoplasm. The protein resides in the cytoskeleton. Its function is as follows. Tubulin is the major constituent of microtubules, a cylinder consisting of laterally associated linear protofilaments composed of alpha- and beta-tubulin heterodimers. Microtubules grow by the addition of GTP-tubulin dimers to the microtubule end, where a stabilizing cap forms. Below the cap, tubulin dimers are in GDP-bound state, owing to GTPase activity of alpha-tubulin. This chain is Tubulin beta-2 chain (TUBB2), found in Solanum tuberosum (Potato).